The sequence spans 465 residues: BTB/POZ and MATH domain-containing protein 4 (465 aa).

The disordered stretch occupies residues 12 to 40 (LQRQNPLQKSEQQRRNFEMPSPPTTTSLS). Positions 46–180 (NGSHSFTIKG…DDCLKINCTV (135 aa)) constitute an MATH domain. A BTB domain is found at 216-282 (SDITFNVSGE…IYKDALIEDA (67 aa)). 2 disordered regions span residues 395–429 (SGGG…INGG) and 441–465 (VNAN…ELED). Over residues 442-458 (NANGSGRNNNDNNNSDD) the composition is skewed to low complexity.

The protein belongs to the Tdpoz family. As to quaternary structure, interacts with RAP2-4. Binds to MYB56 at the promoter of FLOWERING LOCUS T (FT). As to expression, ubiquitous.

Its subcellular location is the cytoplasm. It functions in the pathway protein modification; protein ubiquitination. May act as a substrate-specific adapter of an E3 ubiquitin-protein ligase complex (CUL3-RBX1-BTB) which mediates the ubiquitination and subsequent proteasomal degradation of target proteins. The protein is BTB/POZ and MATH domain-containing protein 4 (BPM4) of Arabidopsis thaliana (Mouse-ear cress).